The following is a 597-amino-acid chain: Elongation factor 4 (597 aa).

Residues 2 to 184 (DHIRNFSIIA…SLIAKVPPPK (183 aa)) form the tr-type G domain. GTP-binding positions include 14 to 19 (DHGKST) and 131 to 134 (NKID).

This sequence belongs to the TRAFAC class translation factor GTPase superfamily. Classic translation factor GTPase family. LepA subfamily.

The protein localises to the cell inner membrane. It carries out the reaction GTP + H2O = GDP + phosphate + H(+). Its function is as follows. Required for accurate and efficient protein synthesis under certain stress conditions. May act as a fidelity factor of the translation reaction, by catalyzing a one-codon backward translocation of tRNAs on improperly translocated ribosomes. Back-translocation proceeds from a post-translocation (POST) complex to a pre-translocation (PRE) complex, thus giving elongation factor G a second chance to translocate the tRNAs correctly. Binds to ribosomes in a GTP-dependent manner. The chain is Elongation factor 4 from Burkholderia cenocepacia (strain HI2424).